The sequence spans 336 residues: DNA-directed RNA polymerase subunit alpha (336 aa).

The alpha N-terminal domain (alpha-NTD) stretch occupies residues Met1 to Asn226. Positions Ala241–Leu336 are alpha C-terminal domain (alpha-CTD).

Belongs to the RNA polymerase alpha chain family. As to quaternary structure, homodimer. The RNAP catalytic core consists of 2 alpha, 1 beta, 1 beta' and 1 omega subunit. When a sigma factor is associated with the core the holoenzyme is formed, which can initiate transcription.

The catalysed reaction is RNA(n) + a ribonucleoside 5'-triphosphate = RNA(n+1) + diphosphate. In terms of biological role, DNA-dependent RNA polymerase catalyzes the transcription of DNA into RNA using the four ribonucleoside triphosphates as substrates. This Paenarthrobacter aurescens (strain TC1) protein is DNA-directed RNA polymerase subunit alpha.